The primary structure comprises 587 residues: Glutathione hydrolase proenzyme (587 aa).

The first 28 residues, 1–28, serve as a signal peptide directing secretion; sequence MKRTWNVCLTALLSVLLVAGSVPFHAEA. A propeptide spanning residues 29-35 is cleaved from the precursor; it reads KKPPKSY. Residue Arg-113 participates in L-glutamate binding. The Nucleophile role is filled by Thr-403. L-glutamate contacts are provided by residues Thr-421, Glu-423, Glu-442, Asp-445, 464-465, and 485-486; these read SS and GG.

Belongs to the gamma-glutamyltransferase family. This enzyme consists of two polypeptide chains, which are synthesized in precursor form from a single polypeptide. In terms of processing, cleaved by autocatalysis into a large and a small subunit.

It localises to the secreted. The catalysed reaction is an N-terminal (5-L-glutamyl)-[peptide] + an alpha-amino acid = 5-L-glutamyl amino acid + an N-terminal L-alpha-aminoacyl-[peptide]. It catalyses the reaction glutathione + H2O = L-cysteinylglycine + L-glutamate. The enzyme catalyses an S-substituted glutathione + H2O = an S-substituted L-cysteinylglycine + L-glutamate. It functions in the pathway sulfur metabolism; glutathione metabolism. Functionally, cleaves the gamma-glutamyl bond of extracellular glutathione (gamma-Glu-Cys-Gly), glutathione conjugates, and other gamma-glutamyl compounds. The metabolism of glutathione releases free glutamate and the dipeptide cysteinyl-glycine, which is hydrolyzed to cysteine and glycine by dipeptidases. This is Glutathione hydrolase proenzyme (ggt) from Bacillus subtilis (strain 168).